A 620-amino-acid polypeptide reads, in one-letter code: EF-hand calcium-binding domain-containing protein 7 (620 aa).

The segment at 1 to 24 (MANHSSLPSQKYAASERQEYQKPQ) is disordered. 2 EF-hand domains span residues 98–133 (ATKNELLKAFRKIDTNNKGYILHNDLYEILTTKGEK) and 134–169 (MSQEEVNSVFRLAEVNSNGKLDYNKFCSTFFKTCEQ). The disordered stretch occupies residues 176–234 (ERMDSNSKAKRQQFGSYIEKSPERSSSPKSSHGNLKLFDSETSTRKENKSSRPSSARSY). Basic and acidic residues predominate over residues 213–225 (FDSETSTRKENKS). Residues 394–429 (EFKSALSDMFDIIDLDGNGLLSLAEYNFFEMRTSGE) enclose the EF-hand 3 domain. Residues Asp-407, Asp-409, Asn-411, and Glu-418 each contribute to the Ca(2+) site.

It localises to the cell projection. It is found in the cilium membrane. Functionally, plays a role in the ciliary Hedgehog (Hh) signaling. This Xenopus laevis (African clawed frog) protein is EF-hand calcium-binding domain-containing protein 7 (efcab7).